The sequence spans 715 residues: MKESTQQFLALTSPGIEVLLFDEIKSLGAFNVIQKPEGVYFQASLALGYKISLWTRLATRIMLKLGEGEAKDKDELFKAASSINWPDIFKSTTTFAVDFVGYSEEIRNSQFGGLTIKDAIVDQFRDQGFERPNVDKKAPQISFQARLLRDNVTIFLDFSGRGLFQRGYREHSGAAPLKENLAAALIIRSGWLNDTSKPLVDPMCGSGTILIEAVSMAAKQAPAINRQSWGFEAWLSHDNAVWQKQLTLAIDSSEENMSNLKVKVFGIDIDERVLRTAQQNARNAQLHQYIEFTCKNTNDMDNTFGQPGTILFNPPYGERIGELPELVENFVLFGQKLKMQFKDWRIAILTANVDLLSMLKLSSFKRYKFKNGPLDCQLALYNLDAKQGAKDAINPQSDFAEEDSAFANRLKKNRKNLKGWLKSNEIEAYRLYDGDIPEYNVAIDIYGEYLVIQEYAAPKTIEEDKAKKRLQEVIYWAPKVLNIPTDKVILKTRAKQRGANQYERLEKTKQSLTINEHGALFKINLWDYLDTGLFLDHRKTRQIVAKKSQGKSLLNLFAYTGSVSVQAAVQGAASITTVDMSNTYLNWAEDNFALNKLNGHKYQFIQADCLDWLKKNVNKFDVIFIDPPTFSNSKRMEDSFDVQRDHVDLITDALKSLNRGGEIFFTNNKRNFKIDFEALDELGLTAEAMSDVTRDKDFARNKHIHNSWSIKRTAT.

Positions 47–158 (LGYKISLWTR…RDNVTIFLDF (112 aa)) constitute a THUMP domain.

The protein belongs to the methyltransferase superfamily. RlmKL family.

The protein resides in the cytoplasm. The catalysed reaction is guanosine(2445) in 23S rRNA + S-adenosyl-L-methionine = N(2)-methylguanosine(2445) in 23S rRNA + S-adenosyl-L-homocysteine + H(+). The enzyme catalyses guanosine(2069) in 23S rRNA + S-adenosyl-L-methionine = N(2)-methylguanosine(2069) in 23S rRNA + S-adenosyl-L-homocysteine + H(+). Specifically methylates the guanine in position 2445 (m2G2445) and the guanine in position 2069 (m7G2069) of 23S rRNA. In Colwellia psychrerythraea (strain 34H / ATCC BAA-681) (Vibrio psychroerythus), this protein is Ribosomal RNA large subunit methyltransferase K/L.